A 364-amino-acid chain; its full sequence is UDP-3-O-acylglucosamine N-acyltransferase (364 aa).

His-257 acts as the Proton acceptor in catalysis.

It belongs to the transferase hexapeptide repeat family. LpxD subfamily. In terms of assembly, homotrimer.

The enzyme catalyses a UDP-3-O-[(3R)-3-hydroxyacyl]-alpha-D-glucosamine + a (3R)-hydroxyacyl-[ACP] = a UDP-2-N,3-O-bis[(3R)-3-hydroxyacyl]-alpha-D-glucosamine + holo-[ACP] + H(+). Its pathway is bacterial outer membrane biogenesis; LPS lipid A biosynthesis. Its function is as follows. Catalyzes the N-acylation of UDP-3-O-acylglucosamine using 3-hydroxyacyl-ACP as the acyl donor. Is involved in the biosynthesis of lipid A, a phosphorylated glycolipid that anchors the lipopolysaccharide to the outer membrane of the cell. The polypeptide is UDP-3-O-acylglucosamine N-acyltransferase (Paracoccus denitrificans (strain Pd 1222)).